Here is a 424-residue protein sequence, read N- to C-terminus: Tyrosine--tRNA ligase (424 aa).

Tyrosine 37 contributes to the L-tyrosine binding site. A 'HIGH' region motif is present at residues 42–51; it reads PTADSLHLGH. Lysine 144 bears the N6-acetyllysine mark. Residues tyrosine 175 and glutamine 179 each contribute to the L-tyrosine site. Positions 235–239 match the 'KMSKS' region motif; sequence KFGKT. Lysine 238 is a binding site for ATP. Positions 357 to 414 constitute an S4 RNA-binding domain; that stretch reads ADLMQALVDSELQPSRGQARKTIASNAITINGEKQSDPEYFFKEEDRLFGRFTLLRRG.

This sequence belongs to the class-I aminoacyl-tRNA synthetase family. TyrS type 1 subfamily. As to quaternary structure, homodimer.

The protein resides in the cytoplasm. It catalyses the reaction tRNA(Tyr) + L-tyrosine + ATP = L-tyrosyl-tRNA(Tyr) + AMP + diphosphate + H(+). Its function is as follows. Catalyzes the attachment of tyrosine to tRNA(Tyr) in a two-step reaction: tyrosine is first activated by ATP to form Tyr-AMP and then transferred to the acceptor end of tRNA(Tyr). The polypeptide is Tyrosine--tRNA ligase (Shigella flexneri serotype 5b (strain 8401)).